The following is a 75-amino-acid chain: Protein B (75 aa).

In Dicentrarchus labrax (European seabass), this protein is Protein B.